We begin with the raw amino-acid sequence, 509 residues long: Bifunctional pantoate ligase/cytidylate kinase (509 aa).

Residues 1-275 are pantoate--beta-alanine ligase; it reads MKKLIIRKTE…CGETRLIDHV (275 aa). ATP is bound at residue 29–36; sequence MGNLHDGH. The active-site Proton donor is His-36. Gln-61 provides a ligand contact to (R)-pantoate. Beta-alanine is bound at residue Gln-61. 149 to 152 contributes to the ATP binding site; the sequence is GEKD. (R)-pantoate is bound at residue Gln-155. 186-189 is a binding site for ATP; the sequence is LSSR. The segment at 276–509 is cytidylate kinase; that stretch reads FLMKRRPIIA…DKIPKESEIK (234 aa).

It in the N-terminal section; belongs to the pantothenate synthetase family. The protein in the C-terminal section; belongs to the cytidylate kinase family. Type 1 subfamily.

The protein localises to the cytoplasm. The catalysed reaction is (R)-pantoate + beta-alanine + ATP = (R)-pantothenate + AMP + diphosphate + H(+). It catalyses the reaction CMP + ATP = CDP + ADP. It carries out the reaction dCMP + ATP = dCDP + ADP. It participates in cofactor biosynthesis; (R)-pantothenate biosynthesis; (R)-pantothenate from (R)-pantoate and beta-alanine: step 1/1. In terms of biological role, catalyzes the condensation of pantoate with beta-alanine in an ATP-dependent reaction via a pantoyl-adenylate intermediate. Functionally, catalyzes the transfer of a phosphate group from ATP to either CMP or dCMP to form CDP or dCDP and ADP, respectively. This is Bifunctional pantoate ligase/cytidylate kinase from Prochlorococcus marinus (strain AS9601).